The chain runs to 181 residues: Isopentenyl-diphosphate Delta-isomerase (181 aa).

Residues histidine 25 and histidine 32 each contribute to the Mn(2+) site. In terms of domain architecture, Nudix hydrolase spans 30 to 164 (PLHLAFSCWL…PWAFSPWMVM (135 aa)). Residue cysteine 67 is part of the active site. Residue histidine 69 coordinates Mn(2+). Glutamate 87 lines the Mg(2+) pocket. Residues glutamate 114 and glutamate 116 each coordinate Mn(2+). Residue glutamate 116 is part of the active site.

It belongs to the IPP isomerase type 1 family. Homodimer. It depends on Mg(2+) as a cofactor. The cofactor is Mn(2+).

The protein resides in the cytoplasm. It catalyses the reaction isopentenyl diphosphate = dimethylallyl diphosphate. Its pathway is isoprenoid biosynthesis; dimethylallyl diphosphate biosynthesis; dimethylallyl diphosphate from isopentenyl diphosphate: step 1/1. In terms of biological role, catalyzes the 1,3-allylic rearrangement of the homoallylic substrate isopentenyl (IPP) to its highly electrophilic allylic isomer, dimethylallyl diphosphate (DMAPP). In Salmonella paratyphi B (strain ATCC BAA-1250 / SPB7), this protein is Isopentenyl-diphosphate Delta-isomerase.